The sequence spans 211 residues: MATKQLLRRQIKRVINALDYDIIAAESHTISQAVRSLIASANSRRVACYMSMDKGEVTTGEIIKNLFQDGQEVFLPRCTHTSESKHFKLREDHHPHLIFHRMSSLKMVRDLKPQGPYQLKEPEPHIEESDILDVVLVPGVAFDIKTGARMGHGAGYYDDFFQRYKILHEGQKPLLVGLCLMEQVASPIPLEKHDYSMDCIVCGDGSIHWFQ.

K4–R8 is a binding site for ATP. Residues E56 and H152–Y156 each bind substrate. Residues G151–D158 and D194 each bind ATP.

Belongs to the 5-formyltetrahydrofolate cyclo-ligase family. In terms of processing, N-glycosylated.

The protein resides in the mitochondrion. It catalyses the reaction (6S)-5-formyl-5,6,7,8-tetrahydrofolate + ATP = (6R)-5,10-methenyltetrahydrofolate + ADP + phosphate. Functionally, only enzyme known to utilize 5-formyltetrahydrofolate (folinic acid) as substrate. Contributes to tetrahydrofolate metabolism in an alternative way of folate biosynthesis. May regulate carbon flow through the folate-dependent one-carbon metabolic network that supplies carbon for the biosynthesis of purines, thymidine and amino acids. This chain is 5-formyltetrahydrofolate cyclo-ligase (FAU1), found in Saccharomyces cerevisiae (strain ATCC 204508 / S288c) (Baker's yeast).